Reading from the N-terminus, the 375-residue chain is N-acetyldiaminopimelate deacetylase (375 aa).

Asp-69 is an active-site residue. Glu-128 functions as the Proton acceptor in the catalytic mechanism.

It belongs to the peptidase M20A family. N-acetyldiaminopimelate deacetylase subfamily.

The enzyme catalyses N-acetyl-(2S,6S)-2,6-diaminopimelate + H2O = (2S,6S)-2,6-diaminopimelate + acetate. It participates in amino-acid biosynthesis; L-lysine biosynthesis via DAP pathway; LL-2,6-diaminopimelate from (S)-tetrahydrodipicolinate (acetylase route): step 3/3. Catalyzes the conversion of N-acetyl-diaminopimelate to diaminopimelate and acetate. In Priestia megaterium (strain ATCC 12872 / QMB1551) (Bacillus megaterium), this protein is N-acetyldiaminopimelate deacetylase.